Consider the following 273-residue polypeptide: Acetyl-coenzyme A carboxylase carboxyl transferase subunit alpha (273 aa).

Residues 1-244 (MKKATQSKAW…KVVLKQALDE (244 aa)) form the CoA carboxyltransferase C-terminal domain.

This sequence belongs to the AccA family. In terms of assembly, acetyl-CoA carboxylase is a heterohexamer composed of biotin carboxyl carrier protein (AccB), biotin carboxylase (AccC) and two subunits each of ACCase subunit alpha (AccA) and ACCase subunit beta (AccD).

It is found in the cytoplasm. It catalyses the reaction N(6)-carboxybiotinyl-L-lysyl-[protein] + acetyl-CoA = N(6)-biotinyl-L-lysyl-[protein] + malonyl-CoA. Its pathway is lipid metabolism; malonyl-CoA biosynthesis; malonyl-CoA from acetyl-CoA: step 1/1. Functionally, component of the acetyl coenzyme A carboxylase (ACC) complex. First, biotin carboxylase catalyzes the carboxylation of biotin on its carrier protein (BCCP) and then the CO(2) group is transferred by the carboxyltransferase to acetyl-CoA to form malonyl-CoA. This is Acetyl-coenzyme A carboxylase carboxyl transferase subunit alpha from Acinetobacter baumannii (strain AB0057).